The chain runs to 392 residues: DNA replication and repair protein RecF (392 aa).

30–37 (GPNAAGKT) is a binding site for ATP.

It belongs to the RecF family.

It is found in the cytoplasm. Its function is as follows. The RecF protein is involved in DNA metabolism; it is required for DNA replication and normal SOS inducibility. RecF binds preferentially to single-stranded, linear DNA. It also seems to bind ATP. In Chloroflexus aggregans (strain MD-66 / DSM 9485), this protein is DNA replication and repair protein RecF.